Consider the following 395-residue polypeptide: S-adenosylmethionine synthase (395 aa).

His19 provides a ligand contact to ATP. Asp21 serves as a coordination point for Mg(2+). K(+) is bound at residue Glu47. Residues Glu60 and Gln103 each contribute to the L-methionine site. The segment at 103–113 is flexible loop; that stretch reads QSPDIAQGVNS. ATP-binding positions include 170–172, 236–237, Asp245, 251–252, Ala268, and Lys272; these read DNK, KF, and RK. Asp245 contacts L-methionine. Position 276 (Lys276) interacts with L-methionine.

The protein belongs to the AdoMet synthase family. In terms of assembly, homotetramer; dimer of dimers. Requires Mg(2+) as cofactor. K(+) is required as a cofactor.

It is found in the cytoplasm. It catalyses the reaction L-methionine + ATP + H2O = S-adenosyl-L-methionine + phosphate + diphosphate. Its pathway is amino-acid biosynthesis; S-adenosyl-L-methionine biosynthesis; S-adenosyl-L-methionine from L-methionine: step 1/1. Functionally, catalyzes the formation of S-adenosylmethionine (AdoMet) from methionine and ATP. The overall synthetic reaction is composed of two sequential steps, AdoMet formation and the subsequent tripolyphosphate hydrolysis which occurs prior to release of AdoMet from the enzyme. The polypeptide is S-adenosylmethionine synthase (Rhodopirellula baltica (strain DSM 10527 / NCIMB 13988 / SH1)).